The following is a 496-amino-acid chain: Cytochrome P450 4ae1 (496 aa).

Cys443 is a heme binding site.

The protein belongs to the cytochrome P450 family. It depends on heme as a cofactor.

Its subcellular location is the endoplasmic reticulum membrane. The protein localises to the microsome membrane. Its function is as follows. May be involved in the metabolism of insect hormones and in the breakdown of synthetic insecticides. The protein is Cytochrome P450 4ae1 (Cyp4ae1) of Drosophila melanogaster (Fruit fly).